A 141-amino-acid polypeptide reads, in one-letter code: Large ribosomal subunit protein uL11 (141 aa).

It belongs to the universal ribosomal protein uL11 family. In terms of assembly, part of the ribosomal stalk of the 50S ribosomal subunit. Interacts with L10 and the large rRNA to form the base of the stalk. L10 forms an elongated spine to which L12 dimers bind in a sequential fashion forming a multimeric L10(L12)X complex. One or more lysine residues are methylated.

Functionally, forms part of the ribosomal stalk which helps the ribosome interact with GTP-bound translation factors. The polypeptide is Large ribosomal subunit protein uL11 (Desulfotalea psychrophila (strain LSv54 / DSM 12343)).